Consider the following 231-residue polypeptide: Phosphatidylserine decarboxylase proenzyme (231 aa).

Ser188 serves as the catalytic Schiff-base intermediate with substrate; via pyruvic acid. Residue Ser188 is modified to Pyruvic acid (Ser); by autocatalysis.

This sequence belongs to the phosphatidylserine decarboxylase family. PSD-A subfamily. As to quaternary structure, heterodimer of a large membrane-associated beta subunit and a small pyruvoyl-containing alpha subunit. Requires pyruvate as cofactor. Is synthesized initially as an inactive proenzyme. Formation of the active enzyme involves a self-maturation process in which the active site pyruvoyl group is generated from an internal serine residue via an autocatalytic post-translational modification. Two non-identical subunits are generated from the proenzyme in this reaction, and the pyruvate is formed at the N-terminus of the alpha chain, which is derived from the carboxyl end of the proenzyme. The post-translation cleavage follows an unusual pathway, termed non-hydrolytic serinolysis, in which the side chain hydroxyl group of the serine supplies its oxygen atom to form the C-terminus of the beta chain, while the remainder of the serine residue undergoes an oxidative deamination to produce ammonia and the pyruvoyl prosthetic group on the alpha chain.

The protein localises to the cell membrane. It catalyses the reaction a 1,2-diacyl-sn-glycero-3-phospho-L-serine + H(+) = a 1,2-diacyl-sn-glycero-3-phosphoethanolamine + CO2. It participates in phospholipid metabolism; phosphatidylethanolamine biosynthesis; phosphatidylethanolamine from CDP-diacylglycerol: step 2/2. Its function is as follows. Catalyzes the formation of phosphatidylethanolamine (PtdEtn) from phosphatidylserine (PtdSer). The protein is Phosphatidylserine decarboxylase proenzyme of Rickettsia peacockii (strain Rustic).